The following is a 184-amino-acid chain: UPF0179 protein Pcal_2106 (184 aa).

The span at 146-161 (GASSAGISQAPSRVPL) shows a compositional bias: low complexity. Positions 146–184 (GASSAGISQAPSRVPLSKPPSKSPSPQKSSPRGPTSRLP) are disordered.

It belongs to the UPF0179 family.

The sequence is that of UPF0179 protein Pcal_2106 from Pyrobaculum calidifontis (strain DSM 21063 / JCM 11548 / VA1).